The following is a 380-amino-acid chain: Cytochrome b (380 aa).

4 helical membrane passes run 34–54, 78–99, 114–134, and 179–199; these read FGSLLGICLMTQILTGLLLAM, WLIRNLHANGASFFFICIYLHI, WNTGIILLLTLMATAFVGYVL, and FFALHFLLPFAIAGLTLIHLT. Positions 84 and 98 each coordinate heme b. Heme b-binding residues include His183 and His197. A ubiquinone is bound at residue His202. 4 helical membrane passes run 227 to 247, 289 to 309, 321 to 341, and 348 to 368; these read LKDILGFTLMFLPLTSLALFS, LGGVLALAASVLVLFLSPFLH, LSQLLFWILVTNLFILTWVGS, and FIIIGQLASVTYFTILLILFP.

The protein belongs to the cytochrome b family. In terms of assembly, the cytochrome bc1 complex contains 11 subunits: 3 respiratory subunits (MT-CYB, CYC1 and UQCRFS1), 2 core proteins (UQCRC1 and UQCRC2) and 6 low-molecular weight proteins (UQCRH/QCR6, UQCRB/QCR7, UQCRQ/QCR8, UQCR10/QCR9, UQCR11/QCR10 and a cleavage product of UQCRFS1). This cytochrome bc1 complex then forms a dimer. Requires heme b as cofactor.

The protein resides in the mitochondrion inner membrane. Its function is as follows. Component of the ubiquinol-cytochrome c reductase complex (complex III or cytochrome b-c1 complex) that is part of the mitochondrial respiratory chain. The b-c1 complex mediates electron transfer from ubiquinol to cytochrome c. Contributes to the generation of a proton gradient across the mitochondrial membrane that is then used for ATP synthesis. The polypeptide is Cytochrome b (MT-CYB) (Thalassoica antarctica (Antarctic petrel)).